A 427-amino-acid polypeptide reads, in one-letter code: Serine--tRNA ligase (427 aa).

L-serine is bound at residue 231–233 (TAE). 262 to 264 (RSE) contributes to the ATP binding site. Glu-285 contacts L-serine. Residue 349–352 (EISS) participates in ATP binding. Ser-385 is an L-serine binding site.

Belongs to the class-II aminoacyl-tRNA synthetase family. Type-1 seryl-tRNA synthetase subfamily. Homodimer. The tRNA molecule binds across the dimer.

The protein localises to the cytoplasm. It carries out the reaction tRNA(Ser) + L-serine + ATP = L-seryl-tRNA(Ser) + AMP + diphosphate + H(+). The catalysed reaction is tRNA(Sec) + L-serine + ATP = L-seryl-tRNA(Sec) + AMP + diphosphate + H(+). It participates in aminoacyl-tRNA biosynthesis; selenocysteinyl-tRNA(Sec) biosynthesis; L-seryl-tRNA(Sec) from L-serine and tRNA(Sec): step 1/1. Catalyzes the attachment of serine to tRNA(Ser). Is also able to aminoacylate tRNA(Sec) with serine, to form the misacylated tRNA L-seryl-tRNA(Sec), which will be further converted into selenocysteinyl-tRNA(Sec). The polypeptide is Serine--tRNA ligase (Brucella canis (strain ATCC 23365 / NCTC 10854 / RM-666)).